A 220-amino-acid chain; its full sequence is Phosphatidylserine decarboxylase proenzyme (220 aa).

S188 functions as the Schiff-base intermediate with substrate; via pyruvic acid in the catalytic mechanism. S188 is modified (pyruvic acid (Ser); by autocatalysis).

It belongs to the phosphatidylserine decarboxylase family. PSD-A subfamily. In terms of assembly, heterodimer of a large membrane-associated beta subunit and a small pyruvoyl-containing alpha subunit. The cofactor is pyruvate. Post-translationally, is synthesized initially as an inactive proenzyme. Formation of the active enzyme involves a self-maturation process in which the active site pyruvoyl group is generated from an internal serine residue via an autocatalytic post-translational modification. Two non-identical subunits are generated from the proenzyme in this reaction, and the pyruvate is formed at the N-terminus of the alpha chain, which is derived from the carboxyl end of the proenzyme. The post-translation cleavage follows an unusual pathway, termed non-hydrolytic serinolysis, in which the side chain hydroxyl group of the serine supplies its oxygen atom to form the C-terminus of the beta chain, while the remainder of the serine residue undergoes an oxidative deamination to produce ammonia and the pyruvoyl prosthetic group on the alpha chain.

Its subcellular location is the cell membrane. The catalysed reaction is a 1,2-diacyl-sn-glycero-3-phospho-L-serine + H(+) = a 1,2-diacyl-sn-glycero-3-phosphoethanolamine + CO2. The protein operates within phospholipid metabolism; phosphatidylethanolamine biosynthesis; phosphatidylethanolamine from CDP-diacylglycerol: step 2/2. Functionally, catalyzes the formation of phosphatidylethanolamine (PtdEtn) from phosphatidylserine (PtdSer). The sequence is that of Phosphatidylserine decarboxylase proenzyme from Cytophaga hutchinsonii (strain ATCC 33406 / DSM 1761 / CIP 103989 / NBRC 15051 / NCIMB 9469 / D465).